The primary structure comprises 173 residues: MTARVCVARIGAAHGLRGEVRLWTFTEDPMSVTRYGPLSTKDGARQLEVSHARAASDHLIATLTGVTTREEAERLNGTELYVARDKLPETDEGEFYHADLIGLAAFDAAGTALGTVAAIHNFGAGDIIEIAPARGPTLMLPFTDAVVPIVDIAGGRVVIEAPAEIDGEEPNSV.

In terms of domain architecture, PRC barrel spans 92-165; sequence EGEFYHADLI…RVVIEAPAEI (74 aa).

Belongs to the RimM family. In terms of assembly, binds ribosomal protein uS19.

Its subcellular location is the cytoplasm. An accessory protein needed during the final step in the assembly of 30S ribosomal subunit, possibly for assembly of the head region. Essential for efficient processing of 16S rRNA. May be needed both before and after RbfA during the maturation of 16S rRNA. It has affinity for free ribosomal 30S subunits but not for 70S ribosomes. The sequence is that of Ribosome maturation factor RimM from Nitrobacter winogradskyi (strain ATCC 25391 / DSM 10237 / CIP 104748 / NCIMB 11846 / Nb-255).